The sequence spans 123 residues: Ribosome-binding factor A (123 aa).

It belongs to the RbfA family. As to quaternary structure, monomer. Binds 30S ribosomal subunits, but not 50S ribosomal subunits or 70S ribosomes.

It localises to the cytoplasm. One of several proteins that assist in the late maturation steps of the functional core of the 30S ribosomal subunit. Associates with free 30S ribosomal subunits (but not with 30S subunits that are part of 70S ribosomes or polysomes). Required for efficient processing of 16S rRNA. May interact with the 5'-terminal helix region of 16S rRNA. The protein is Ribosome-binding factor A of Prochlorococcus marinus (strain NATL1A).